Reading from the N-terminus, the 284-residue chain is Bifunctional protein FolD (284 aa).

NADP(+)-binding positions include 166–168 (GAS), serine 191, and isoleucine 232.

The protein belongs to the tetrahydrofolate dehydrogenase/cyclohydrolase family. As to quaternary structure, homodimer.

It carries out the reaction (6R)-5,10-methylene-5,6,7,8-tetrahydrofolate + NADP(+) = (6R)-5,10-methenyltetrahydrofolate + NADPH. It catalyses the reaction (6R)-5,10-methenyltetrahydrofolate + H2O = (6R)-10-formyltetrahydrofolate + H(+). It participates in one-carbon metabolism; tetrahydrofolate interconversion. Catalyzes the oxidation of 5,10-methylenetetrahydrofolate to 5,10-methenyltetrahydrofolate and then the hydrolysis of 5,10-methenyltetrahydrofolate to 10-formyltetrahydrofolate. The polypeptide is Bifunctional protein FolD (Neisseria meningitidis serogroup B (strain ATCC BAA-335 / MC58)).